We begin with the raw amino-acid sequence, 60 residues long: MTYCHTDVSYFEIQHSCIFSLLSLVVERCTCNAKVASSILAGGIIPVLFFFPLFLFLYHL.

A helical membrane pass occupies residues 38-58 (SILAGGIIPVLFFFPLFLFLY).

Its subcellular location is the membrane. This is an uncharacterized protein from Saccharomyces cerevisiae (strain ATCC 204508 / S288c) (Baker's yeast).